The following is a 430-amino-acid chain: MRVSISKSSVKGEVFAPSSKSYTHRAITLAALSNESIVRRPLLSADTLATIRASEMFGASVKREEENLIIHGFNGKPNVPDDVIDAANSGTTLRLMTAIAGLTDGITVLTGDSSLRTRPNGPLLKTLNQLGASACSTRGNEKAPLVVKGGLEGKKVSIEGSISSQFISALLIACPLAENSTTLSIIGKLKSRPYVDVTIEMLELAGVKIHTDENNGTKFIIPGKQKYDLKEYTIPGDFSSASYLLAAAAMTEGSEITVKNLFPSKQGDKLIIETLKQMGADITWDREAGIVTVRGGRKLKAVTFDAGATPDLVPTVAVLAAVAEGTSRIENAEHVRYKETDRLSALATELPKLGVKLKEEKDSLTITGGELKGAEVHGWDDHRIVMSLALAGMVAGNTTIDTTESVAISYPDFFEDMSNLGVKIKQISEE.

Residues Lys20, Ser21, and Arg25 each contribute to the 3-phosphoshikimate site. Residue Lys20 coordinates phosphoenolpyruvate. Positions 90 and 118 each coordinate phosphoenolpyruvate. 6 residues coordinate 3-phosphoshikimate: Ser163, Ser164, Gln165, Ser191, Asp311, and Lys338. Residue Gln165 participates in phosphoenolpyruvate binding. Asp311 acts as the Proton acceptor in catalysis. Arg342 and Arg383 together coordinate phosphoenolpyruvate.

It belongs to the EPSP synthase family. In terms of assembly, monomer.

Its subcellular location is the cytoplasm. The catalysed reaction is 3-phosphoshikimate + phosphoenolpyruvate = 5-O-(1-carboxyvinyl)-3-phosphoshikimate + phosphate. The protein operates within metabolic intermediate biosynthesis; chorismate biosynthesis. Catalyzes the transfer of the enolpyruvyl moiety of phosphoenolpyruvate (PEP) to the 5-hydroxyl of shikimate-3-phosphate (S3P) to produce enolpyruvyl shikimate-3-phosphate and inorganic phosphate. The protein is 3-phosphoshikimate 1-carboxyvinyltransferase of Methanosarcina acetivorans (strain ATCC 35395 / DSM 2834 / JCM 12185 / C2A).